The following is a 345-amino-acid chain: tRNA-specific 2-thiouridylase MnmA (345 aa).

ATP contacts are provided by residues 6–13 (AMSGGVDS) and Leu-32. The Nucleophile role is filled by Cys-100. A disulfide bond links Cys-100 and Cys-197. Gly-124 is an ATP binding site. The interval 146–148 (RDQ) is interaction with tRNA. Cys-197 functions as the Cysteine persulfide intermediate in the catalytic mechanism.

This sequence belongs to the MnmA/TRMU family.

It localises to the cytoplasm. The catalysed reaction is S-sulfanyl-L-cysteinyl-[protein] + uridine(34) in tRNA + AH2 + ATP = 2-thiouridine(34) in tRNA + L-cysteinyl-[protein] + A + AMP + diphosphate + H(+). Functionally, catalyzes the 2-thiolation of uridine at the wobble position (U34) of tRNA, leading to the formation of s(2)U34. The polypeptide is tRNA-specific 2-thiouridylase MnmA (Acidiphilium cryptum (strain JF-5)).